Here is a 290-residue protein sequence, read N- to C-terminus: Arginine and glutamate-rich protein 1 (290 aa).

Over residues 1–10 (MGSRSRTPSP) the composition is skewed to polar residues. 3 disordered regions span residues 1–137 (MGSR…AKEL), 193–216 (ERRR…KREE), and 249–290 (MDEE…PGAL). Positions 12-28 (GKRRHHKSKHKKRSKSH) are enriched in basic residues. 2 stretches are compositionally biased toward basic and acidic residues: residues 29–44 (HDHE…DKSS) and 53–76 (RERD…DYRH). Phosphoserine occurs at positions 77 and 79. Residues 88-99 (SSSSSDSQYSEQ) show a composition bias toward low complexity. Residues 111–269 (FKKLDEQNQM…QEKRVKEEQK (159 aa)) are a coiled coil. The segment covering 124–137 (RLAEMERQRRAKEL) has biased composition (basic and acidic residues). Basic and acidic residues predominate over residues 249-269 (MDEERQRMRKEQEKRVKEEQK).

The protein belongs to the ARGLU1 family. As to quaternary structure, associates with the U1-snRNP complex; the interaction is enhanced by binding of Arglu1 to a stable intronic sequence RNA (sisRNA) produced from the Arglu1 gene by premature cleavage.

Its subcellular location is the nucleus. The protein localises to the nucleus speckle. Its function is as follows. Post-transcriptional regulator of gene expression; modulates splicing and premature cleavage at cryptic polyadenylation sites of its own pre-mRNA through binding and regulation of the U1-snRNP complex. The sequence is that of Arginine and glutamate-rich protein 1 from Drosophila melanogaster (Fruit fly).